The sequence spans 329 residues: Cytosolic arginine sensor for mTORC1 subunit 2 (329 aa).

2 consecutive ACT domains span residues 72–139 (ADAT…MHTL) and 262–322 (ELWK…NALQ).

Belongs to the GATS family. As to quaternary structure, may form homodimers and heterodimers.

The protein resides in the cytoplasm. It localises to the cytosol. Functions as a negative regulator of the TORC1 signaling pathway. This chain is Cytosolic arginine sensor for mTORC1 subunit 2, found in Xenopus tropicalis (Western clawed frog).